We begin with the raw amino-acid sequence, 553 residues long: Mucolipin-3 (553 aa).

Topologically, residues 1–62 (MANPEIVISS…FWARGRKPWK (62 aa)) are cytoplasmic. The interval 52-62 (KFWARGRKPWK) is interaction with phosphoinositides. Residues 63 to 83 (LAIQILKIAMVTIQLVLFGLS) form a helical membrane-spanning segment. The Extracellular segment spans residues 84–283 (NQMVVAFKEE…VSGSIQKNTH (200 aa)). An extracellular/lumenal pore loop region spans residues 104–118 (KGYIDRMDDTYAVYT). N-linked (GlcNAc...) asparagine glycosylation occurs at Asn138. Cys159 and Cys185 form a disulfide bridge. Asn205 carries N-linked (GlcNAc...) asparagine glycosylation. Residues Cys238 and Cys269 are joined by a disulfide bond. The chain crosses the membrane as a helical span at residues 284-304 (NMMIFDAFVILTCLVSLILCI). The Cytoplasmic segment spans residues 305–341 (RSVISGLQLQQEFVNFFLLHYKKDVSVSDQMEFVNGW). A helical transmembrane segment spans residues 342–362 (YIMIIISDILTIIGSILKMEI). The Extracellular segment spans residues 363 to 371 (QAKSLTSYD). The helical transmembrane segment at 372–392 (VCSILLGTSTMLVWLGVIRYL) threads the bilayer. Topologically, residues 393 to 414 (GFFAKYNLLILTLQAALPNVIR) are cytoplasmic. The chain crosses the membrane as a helical span at residues 415-435 (FCCCAAMIYLGYCFCGWIVLG). The Extracellular portion of the chain corresponds to 436–443 (PYHNKFRS). Residues 444–464 (LNMVSECLFSLINGDDMFATF) constitute an intramembrane region (pore-forming). A Selectivity filter motif is present at residues 456–459 (NGDD). Over 465–475 (AKMQQKSYLVW) the chain is Extracellular. A helical transmembrane segment spans residues 476 to 497 (LFSRIYLYSFISLFIYMILSLF). At 498–553 (IALITDTYETIKHYQQDGFPETELRTFISECKDLPNSGKFRLEDDPPVSLFCCCKK) the chain is on the cytoplasmic side.

It belongs to the transient receptor (TC 1.A.4) family. Polycystin subfamily. MCOLN3 sub-subfamily. Homotetramer. Can heterooligomerize with MCOLN1; heteromeric assemblies have different channel properties as compared to the respective homooligomers and may be tissue-specific. May heterooligomerize with TRPV5 to form a functional distinct ion channel. Interacts with GABARAPL2. Post-translationally, N-glycosylated.

The protein localises to the lysosome membrane. Its subcellular location is the early endosome membrane. It is found in the late endosome membrane. The protein resides in the cytoplasmic vesicle. It localises to the autophagosome membrane. The protein localises to the cell projection. Its subcellular location is the stereocilium membrane. It carries out the reaction Ca(2+)(in) = Ca(2+)(out). It catalyses the reaction Mg(2+)(in) = Mg(2+)(out). The catalysed reaction is K(+)(in) = K(+)(out). The enzyme catalyses Na(+)(in) = Na(+)(out). Its activity is regulated as follows. Channel activity is activated by PtdIns(3,5)P2 (phosphatidylinositol 3,5-bisphosphate). Inhibited by lumenal H(+) and Na(+). The channel pore shows dynamic behavior and undergoes spontaneous, Ca(2+)-dependent modulation when conducting Ca(2+). In terms of biological role, nonselective cation channel probably playing a role in the regulation of membrane trafficking events. Acts as a Ca(2+)-permeable cation channel with inwardly rectifying activity. Mediates release of Ca(2+) from endosomes to the cytoplasm, contributes to endosomal acidification and is involved in the regulation of membrane trafficking and fusion in the endosomal pathway. Also permeable to Mg(2+), Na(+) and K(+). Does not seem to act as mechanosensory transduction channel in inner ear sensory hair cells. Proposed to play a critical role at the cochlear stereocilia ankle-link region during hair-bundle growth. Involved in the regulation of autophagy. Through association with GABARAPL2 may be involved in autophagosome formation possibly providing Ca(2+) for the fusion process. Through a possible and probably tissue-specific heteromerization with MCOLN1 may be at least in part involved in many lysosome-dependent cellular events. Possible heteromeric ion channel assemblies with TRPV5 show pharmacological similarity with TRPML3. This chain is Mucolipin-3, found in Callithrix jacchus (White-tufted-ear marmoset).